A 505-amino-acid polypeptide reads, in one-letter code: Trans-cinnamate 4-monooxygenase (505 aa).

Residues 3 to 23 (LLLIEKTLVALFAAIIGAILI) traverse the membrane as a helical segment. (E)-cinnamate is bound by residues 213 to 218 (RSRLAQ) and A306. Position 447 (C447) interacts with heme.

Belongs to the cytochrome P450 family. The cofactor is heme.

Its subcellular location is the membrane. The catalysed reaction is (E)-cinnamate + reduced [NADPH--hemoprotein reductase] + O2 = (E)-4-coumarate + oxidized [NADPH--hemoprotein reductase] + H2O + H(+). Its pathway is phenylpropanoid metabolism; trans-4-coumarate biosynthesis; trans-4-coumarate from trans-cinnamate: step 1/1. With respect to regulation, inactivated by piperonylic acid. Its function is as follows. Catalyzes the first oxidative step of the phenylpropanoid pathway in higher plants by transforming trans-cinnamate into p-coumarate. The compounds formed by this pathway are essential components for lignification, pollination, and defense against ultraviolet light, predators and pathogens. Can also use 2-naphthoic acid as substrate. The sequence is that of Trans-cinnamate 4-monooxygenase from Helianthus tuberosus (Jerusalem artichoke).